We begin with the raw amino-acid sequence, 224 residues long: 7-cyano-7-deazaguanine synthase (224 aa).

9–19 (LSGGLDSATAL) contacts ATP. Zn(2+)-binding residues include Cys188, Cys198, Cys201, and Cys204.

It belongs to the QueC family. Zn(2+) serves as cofactor.

The enzyme catalyses 7-carboxy-7-deazaguanine + NH4(+) + ATP = 7-cyano-7-deazaguanine + ADP + phosphate + H2O + H(+). The protein operates within purine metabolism; 7-cyano-7-deazaguanine biosynthesis. Catalyzes the ATP-dependent conversion of 7-carboxy-7-deazaguanine (CDG) to 7-cyano-7-deazaguanine (preQ(0)). The sequence is that of 7-cyano-7-deazaguanine synthase from Thiobacillus denitrificans (strain ATCC 25259 / T1).